We begin with the raw amino-acid sequence, 239 residues long: Ribonuclease PH (239 aa).

Phosphate is bound by residues arginine 86 and 124 to 126; that span reads GTR.

The protein belongs to the RNase PH family. As to quaternary structure, homohexameric ring arranged as a trimer of dimers.

The catalysed reaction is tRNA(n+1) + phosphate = tRNA(n) + a ribonucleoside 5'-diphosphate. In terms of biological role, phosphorolytic 3'-5' exoribonuclease that plays an important role in tRNA 3'-end maturation. Removes nucleotide residues following the 3'-CCA terminus of tRNAs; can also add nucleotides to the ends of RNA molecules by using nucleoside diphosphates as substrates, but this may not be physiologically important. Probably plays a role in initiation of 16S rRNA degradation (leading to ribosome degradation) during starvation. In Rickettsia africae (strain ESF-5), this protein is Ribonuclease PH.